A 335-amino-acid polypeptide reads, in one-letter code: Spliceosome-associated protein 49 (335 aa).

RRM domains lie at 13 to 84 (IYLG…PIRV) and 101 to 172 (LFVG…PITV). Residues 204 to 223 (VTPQSTLPPGFSPATPAPTS) are disordered.

Belongs to the SF3B4 family.

It is found in the nucleus. The chain is Spliceosome-associated protein 49 (sap49) from Schizosaccharomyces pombe (strain 972 / ATCC 24843) (Fission yeast).